The primary structure comprises 1911 residues: MEVKKSSYNNREVATQKKGRRFVMILKFFLLGNPLSLCMKIINSVVIVGLYYGFMTTFSIGPSYLFLLRAWLMEEGTEKQISATTGFIMGQLIIFISIYYAPLHLALGKPHTMTVLVLPYLLFNFFWNNNKNFLDYRSTTRNSIRNFNIQCIFLNNFIFQLFNHFILPSSTLARLVNIYMFRCNNKMLFVTSTFIGWLIGHIFFIKCVGLVLFWIRQNHSIQSNKYLLSELRNSLARIFSILLFITCVYYLGRMPLPIITKKLKETSETEESEENEEESDIEITSEPKEQDEEEGSTEENLYFGYEEKEDLYKINETNKIPVNGKEKTKDEFHFKETYYKDSPVYEDSYLDRYQEQELWELESKEDKNLFWFEKPLVTFLFDCKRWNRPFRYIKNDRFENAVRNEMSQYFFYTCPSDGKQRISFTYPPSLSTFSEMIERKISLYTTEKLSHEDNYWVYTNEQKKHTLSNELINRIKTLEKKTGSLVLDVLEKRIRLCNDENEKECLPKMYDPFLNGPYRGKITKLDSRSIRDDLITSTDAEESIEIVWINKIHGLLPIPNDSPKKEFEYQKNLFDGEFLSTNSGHSSTSIGEVPLEYPPSLNLKKLSLLAEEKRMDSEKQAKCLQLIFDVVTTDYNDQTIRNQNNKLIFPGIEEIRKEVPRWSYKLTDDLEEQEEENEEESMEDHEIRSRKAKRVVIYTDKEETTNAISNTSDSDQAEEVALIRYSQQSDFRRDLIKGSMRAQRRKTVIWEMFQANVHSPLFLDQIDKTFFLSFDISEMMNLVFRGWVGRESEFKISDSEEEETKEREKNKEKKEENERITISETWDSIIFAQAIRGSMLVTQSILRKYIVLPSLIIAKNVGRMLLFQFPEWYEDLKDWNREMHVKCTYNGVQLSETEFPKDWLTDGIQIKILFPFRLKPWRKSKVRPHHRDTMKKKGKKNNFCFLTVWGREAELPFGSPRKQPSFFQPIWKELNNKIRKLEKTFSLSLVLRVSKKTRKWFLKISKEKTRWVNKIVLVIKRIMKELEKINPIFLFGFGKVKVYESNENRKDSIISNKTTDESTIRIRSTNWTKHSLIEKKVKDLADRTTTIRNQIEQITKDKKKIVVTPGISISPNKTNCADKNSELQKPIWQIFKRKSTRLIRKFYYFLKYFIERIYSDILLCTINSLRTNAQLFLESTKKMINKFFYHDETNQEGIDQTNQNTIHFISTMQKSLSNISNKNSNISCDLSSLSQAYVFYTLSQVQVNNKYYLRSVFQYHGTHLFLKDRIKDYCGTRGLFDYKPKHKKVDKSGINEWKNWLKSHYQYNLSQTQWSRLVPQKWRNRVNQRCTIQKKDSIILDSYKKNQLIHYVKQNDYGIDSWTGQKEKLKKNYKYDLLAHKYMNYEDGGDSYIYASPLQVNRDPKIPYNFNTQKTQKPESFYALVGIDISDYLGEESSLYGEKNLDRKYFDCRILRFCFRKNIDIDIWTNMHIGTKINKNTKAGTQNYQKWDNKDIYPLTIHQKTKPSTSNKRKKLFDWMGMNKERLYRPISNLESWFFPEFGLLYDAYKLKPWIIPIQFLLLNIHRNTNLSPNNNINGNQKKDLNLRSNKKEYLELENQNQQEKKQKLSQRDLGSDTQQDTQKQKKKEDGEKNYTESTIKKRRKKKQFKSKKEAELDFFLKKYFLFQLRWDDSLNQRMINNIKVYCLLLRLINLKEIAISSIQRGEMRLDVMLIQKDLSLTELIKRGIFIIEPVRLSIKWDEEFFIYQTLGISLVNKSKQQSETDRRYIQKYLDENPFDKSISRHSTMLVSEDKNYYDLFVPENILSTRRRRELRILICFNSWKGNVVDVDRNFIFFNENDIRNCGQFLKKDKHFNTDPNKNKLMKLKLFLWPNYRLEDLACMNRYWFDTNNGSRFSMSRIQMYPQFRIY.

The next 6 membrane-spanning stretches (helical) occupy residues 41–61, 81–103, 108–128, 147–167, 195–215, and 238–258; these read IINS…FSIG, ISAT…YAPL, GKPH…FFWN, FNIQ…HFIL, IGWL…LFWI, and IFSI…PLPI. 3 disordered regions span residues 265–299, 798–817, and 1599–1647; these read ETSE…STEE, DSEE…KEEN, and NQNQ…RKKK. The segment covering 268–297 has biased composition (acidic residues); that stretch reads ETEESEENEEESDIEITSEPKEQDEEEGST. 2 stretches are compositionally biased toward basic and acidic residues: residues 1603–1615 and 1623–1635; these read QEKK…RDLG and QKQK…EKNY.

Belongs to the TIC214 family. Part of the Tic complex.

It is found in the plastid. The protein localises to the chloroplast inner membrane. Involved in protein precursor import into chloroplasts. May be part of an intermediate translocation complex acting as a protein-conducting channel at the inner envelope. This chain is Protein TIC 214, found in Lemna minor (Common duckweed).